Consider the following 335-residue polypeptide: Fructose-1,6-bisphosphatase class 1 (335 aa).

Mg(2+)-binding residues include E92, D114, L116, and D117. Residues 117 to 120 (DGSS), N209, and K275 each bind substrate. Residue E281 coordinates Mg(2+).

This sequence belongs to the FBPase class 1 family. In terms of assembly, homotetramer. Requires Mg(2+) as cofactor.

It is found in the cytoplasm. The enzyme catalyses beta-D-fructose 1,6-bisphosphate + H2O = beta-D-fructose 6-phosphate + phosphate. It functions in the pathway carbohydrate biosynthesis; gluconeogenesis. This is Fructose-1,6-bisphosphatase class 1 from Paracidovorax citrulli (strain AAC00-1) (Acidovorax citrulli).